We begin with the raw amino-acid sequence, 60 residues long: Large ribosomal subunit protein bL32 (60 aa).

Positions 1 to 16 are enriched in basic residues; sequence MPNPKRRHSKKRTSTR. The disordered stretch occupies residues 1–28; the sequence is MPNPKRRHSKKRTSTRRAHDALKQPGLS.

It belongs to the bacterial ribosomal protein bL32 family.

The polypeptide is Large ribosomal subunit protein bL32 (Solibacter usitatus (strain Ellin6076)).